The following is a 356-amino-acid chain: Heparan sulfate 2-O-sulfotransferase 1 (356 aa).

At 1 to 11 (MGLLRIMMPPK) the chain is on the cytoplasmic side. A helical; Signal-anchor for type II membrane protein membrane pass occupies residues 12–28 (LQLLAVVAFAVAMLFLE). Residues 24–51 (MLFLENQIQKLEESRAKLERAIARHEVR) are a coiled coil. The Lumenal segment spans residues 29-356 (NQIQKLEESR…FYEKIYPKSN (328 aa)). Residues lysine 83, threonine 84, alanine 85, serine 86, threonine 87, and serine 88 each contribute to the adenosine 3',5'-bisphosphate site. N-linked (GlcNAc...) asparagine glycosylation is found at asparagine 108 and asparagine 127. Active-site residues include histidine 140 and histidine 142. Adenosine 3',5'-bisphosphate contacts are provided by arginine 164 and serine 172. 2 disulfides stabilise this stretch: cysteine 201/cysteine 209 and cysteine 222/cysteine 228. Adenosine 3',5'-bisphosphate contacts are provided by tyrosine 279, serine 285, threonine 290, and lysine 293.

The protein belongs to the sulfotransferase 3 family. As to quaternary structure, homotrimer. Interacts with the C5-epimerase GLCE. In terms of processing, N-glycosylated. Widely expressed. Expressed at higher level in lung and brain. Weakly expressed in spleen.

The protein localises to the golgi apparatus membrane. Functionally, catalyzes the transfer of a sulfo group from 3'-phospho-5'-adenylyl sulfate (PAPS) to the 2-OH position of iduronic acid (IdoA) or glucuronic acid (GlcA) within the heparan sulfate (HS) chain and participates in HS biosynthesis. Required for metanephric development of kidney formation, suggesting that 2-O-sulfation within HS is essential for signaling between ureteric bud and metanephric mesenchyme. The chain is Heparan sulfate 2-O-sulfotransferase 1 from Mus musculus (Mouse).